Reading from the N-terminus, the 699-residue chain is Polyribonucleotide nucleotidyltransferase (699 aa).

Mg(2+) is bound by residues Asp-485 and Asp-491. A KH domain is found at 552 to 611 (PRITTIKINPEKIRDVIGKGGAVIRALTEETGTTIELEDDGTVKIASSNGEATKEAIRRI). The region spanning 621–689 (GRIYNGKVIR…RQGRVRLSIK (69 aa)) is the S1 motif domain.

This sequence belongs to the polyribonucleotide nucleotidyltransferase family. Component of the RNA degradosome, which is a multiprotein complex involved in RNA processing and mRNA degradation. It depends on Mg(2+) as a cofactor.

The protein resides in the cytoplasm. The enzyme catalyses RNA(n+1) + phosphate = RNA(n) + a ribonucleoside 5'-diphosphate. Functionally, involved in mRNA degradation. Catalyzes the phosphorolysis of single-stranded polyribonucleotides processively in the 3'- to 5'-direction. The chain is Polyribonucleotide nucleotidyltransferase from Shewanella sp. (strain MR-4).